The sequence spans 266 residues: Type III pantothenate kinase (266 aa).

9-16 (DAGNSRIK) contributes to the ATP binding site. Substrate-binding positions include Tyr96 and 103–106 (GSDR). Catalysis depends on Asp105, which acts as the Proton acceptor. Position 129 (Thr129) interacts with ATP. Thr189 is a binding site for substrate.

This sequence belongs to the type III pantothenate kinase family. As to quaternary structure, homodimer. Requires NH4(+) as cofactor. The cofactor is K(+).

The protein localises to the cytoplasm. The catalysed reaction is (R)-pantothenate + ATP = (R)-4'-phosphopantothenate + ADP + H(+). It functions in the pathway cofactor biosynthesis; coenzyme A biosynthesis; CoA from (R)-pantothenate: step 1/5. In terms of biological role, catalyzes the phosphorylation of pantothenate (Pan), the first step in CoA biosynthesis. The protein is Type III pantothenate kinase of Burkholderia lata (strain ATCC 17760 / DSM 23089 / LMG 22485 / NCIMB 9086 / R18194 / 383).